A 211-amino-acid chain; its full sequence is uncharacterized protein (211 aa).

Residues 1–43 are disordered; that stretch reads MRPEVGREPAALQPRQRPRSDHQLHRSPFTVPPRTPACRSPGP.

This is an uncharacterized protein from Homo sapiens (Human).